Here is a 286-residue protein sequence, read N- to C-terminus: Polyamine aminopropyltransferase (286 aa).

In terms of domain architecture, PABS spans 5–238 (TMWHETLHDQ…GIMTFAWATD (234 aa)). Glutamine 33 serves as a coordination point for S-methyl-5'-thioadenosine. Positions 64 and 88 each coordinate spermidine. S-methyl-5'-thioadenosine is bound by residues glutamate 108 and 140 to 141 (DG). Aspartate 158 (proton acceptor) is an active-site residue. 158 to 161 (DCTD) contributes to the spermidine binding site. Proline 165 is an S-methyl-5'-thioadenosine binding site.

The protein belongs to the spermidine/spermine synthase family. As to quaternary structure, homodimer or homotetramer.

Its subcellular location is the cytoplasm. The catalysed reaction is S-adenosyl 3-(methylsulfanyl)propylamine + putrescine = S-methyl-5'-thioadenosine + spermidine + H(+). The protein operates within amine and polyamine biosynthesis; spermidine biosynthesis; spermidine from putrescine: step 1/1. Functionally, catalyzes the irreversible transfer of a propylamine group from the amino donor S-adenosylmethioninamine (decarboxy-AdoMet) to putrescine (1,4-diaminobutane) to yield spermidine. The chain is Polyamine aminopropyltransferase from Salmonella arizonae (strain ATCC BAA-731 / CDC346-86 / RSK2980).